The primary structure comprises 437 residues: Homogentisate 1,2-dioxygenase (437 aa).

The tract at residues 15–34 (NEHATSDPRVPDALPVGQNS) is disordered. Fe cation is bound by residues histidine 336, glutamate 342, and histidine 372.

Belongs to the homogentisate dioxygenase family. Fe cation is required as a cofactor. In terms of tissue distribution, expressed in the hypodermis and intestine.

It catalyses the reaction homogentisate + O2 = 4-maleylacetoacetate + H(+). Its pathway is amino-acid degradation; L-phenylalanine degradation; acetoacetate and fumarate from L-phenylalanine: step 4/6. Plays a role in the tyrosine degradation pathway. This Caenorhabditis elegans protein is Homogentisate 1,2-dioxygenase.